We begin with the raw amino-acid sequence, 272 residues long: Low-density lipoprotein receptor class A domain-containing protein 2 (272 aa).

Residues 1-25 (MEACCLLQLPQRLLLLGAAALTATA) form the signal peptide. The Extracellular portion of the chain corresponds to 26-233 (LETADLAELC…GSTDAHTSRS (208 aa)). Residue N97 is glycosylated (N-linked (GlcNAc...) asparagine). The 43-residue stretch at 172-214 (PCGAYFRCQNGRCIPSSLVCDPWGMDNCGDGSDQGSWSPADCR) folds into the LDL-receptor class A domain. 3 disulfide bridges follow: C173–C184, C179–C199, and C191–C213. Positions 202–272 (GSDQGSWSPA…QDAALEGSTE (71 aa)) are disordered. Positions 220–236 (PSQTGSTDAHTSRSLTP) are enriched in polar residues. Residues 234–250 (LTPSPALGSAGSLWIAA) form a helical membrane-spanning segment. Over 251 to 272 (ERSSPAGRDPTRQDAALEGSTE) the chain is Cytoplasmic.

The protein belongs to the LDLR family.

It is found in the membrane. In Homo sapiens (Human), this protein is Low-density lipoprotein receptor class A domain-containing protein 2 (LDLRAD2).